We begin with the raw amino-acid sequence, 236 residues long: uncharacterized protein (236 aa).

Residues 1-29 (MNNEKNKQDRENLNRQDERKSSEIKSERK) form a disordered region.

This is an uncharacterized protein from Staphylococcus aureus.